Consider the following 346-residue polypeptide: tRNA N6-adenosine threonylcarbamoyltransferase (346 aa).

The Fe cation site is built by His-111 and His-115. Residues Leu-134–Gly-138, Asp-167, Gly-180, Asp-184, and Asn-280 each bind substrate. Fe cation is bound at residue Asp-308.

Belongs to the KAE1 / TsaD family. The cofactor is Fe(2+).

The protein localises to the cytoplasm. The catalysed reaction is L-threonylcarbamoyladenylate + adenosine(37) in tRNA = N(6)-L-threonylcarbamoyladenosine(37) in tRNA + AMP + H(+). Its function is as follows. Required for the formation of a threonylcarbamoyl group on adenosine at position 37 (t(6)A37) in tRNAs that read codons beginning with adenine. Is involved in the transfer of the threonylcarbamoyl moiety of threonylcarbamoyl-AMP (TC-AMP) to the N6 group of A37, together with TsaE and TsaB. TsaD likely plays a direct catalytic role in this reaction. This is tRNA N6-adenosine threonylcarbamoyltransferase from Crocosphaera subtropica (strain ATCC 51142 / BH68) (Cyanothece sp. (strain ATCC 51142)).